We begin with the raw amino-acid sequence, 332 residues long: Phosphate acyltransferase (332 aa).

This sequence belongs to the PlsX family. As to quaternary structure, homodimer. Probably interacts with PlsY.

The protein localises to the cytoplasm. The catalysed reaction is a fatty acyl-[ACP] + phosphate = an acyl phosphate + holo-[ACP]. It participates in lipid metabolism; phospholipid metabolism. Functionally, catalyzes the reversible formation of acyl-phosphate (acyl-PO(4)) from acyl-[acyl-carrier-protein] (acyl-ACP). This enzyme utilizes acyl-ACP as fatty acyl donor, but not acyl-CoA. The sequence is that of Phosphate acyltransferase from Streptococcus mutans serotype c (strain ATCC 700610 / UA159).